A 2115-amino-acid chain; its full sequence is MTLHATRGAALLSWVNSLHVADPVEAVLQLQDCSIFIKIIDRIHGTEEGQQILKQPVSERLDFVCSFLQKNRKHPSSPECLVSAQKVLEGSELELAKMTMLLLYHSTMSSKSPRDWEQFEYKIQAELAVILKFVLDHEDGLNLNEDLENFLQKAPVPSTCSSTFPEELSPPSHQAKREIRFLELQKVASSSSGNNFLSGSPASPMGDILQTPQFQMRRLKKQLADERSNRDELELELAENRKLLTEKDAQIAMMQQRIDRLALLNEKQAASPLEPKELEELRDKNESLTMRLHETLKQCQDLKTEKSQMDRKINQLSEENGDLSFKLREFASHLQQLQDALNELTEEHSKATQEWLEKQAQLEKELSAALQDKKCLEEKNEILQGKLSQLEEHLSQLQDNPPQEKGEVLGDVLQLETLKQEAATLAANNTQLQARVEMLETERGQQEAKLLAERGHFEEEKQQLSSLITDLQSSISNLSQAKEELEQASQAHGARLTAQVASLTSELTTLNATIQQQDQELAGLKQQAKEKQAQLAQTLQQQEQASQGLRHQVEQLSSSLKQKEQQLKEVAEKQEATRQDHAQQLATAAEEREASLRERDAALKQLEALEKEKAAKLEILQQQLQVANEARDSAQTSVTQAQREKAELSRKVEELQACVETARQEQHEAQAQVAELELQLRSEQQKATEKERVAQEKDQLQEQLQALKESLKVTKGSLEEEKRRAADALEEQQRCISELKAETRSLVEQHKRERKELEEERAGRKGLEARLQQLGEAHQAETEVLRRELAEAMAAQHTAESECEQLVKEVAAWRERYEDSQQEEAQYGAMFQEQLMTLKEECEKARQELQEAKEKVAGIESHSELQISRQQNELAELHANLARALQQVQEKEVRAQKLADDLSTLQEKMAATSKEVARLETLVRKAGEQQETASRELVKEPARAGDRQPEWLEEQQGRQFCSTQAALQAMEREAEQMGNELERLRAALMESQGQQQEERGQQEREVARLTQERGRAQADLALEKAARAELEMRLQNALNEQRVEFATLQEALAHALTEKEGKDQELAKLRGLEAAQIKELEELRQTVKQLKEQLAKKEKEHASGSGAQSEAAGRTEPTGPKLEALRAEVSKLEQQCQKQQEQADSLERSLEAERASRAERDSALETLQGQLEEKAQELGHSQSALASAQRELAAFRTKVQDHSKAEDEWKAQVARGRQEAERKNSLISSLEEEVSILNRQVLEKEGESKELKRLVMAESEKSQKLEERLRLLQAETASNSARAAERSSALREEVQSLREEAEKQRVASENLRQELTSQAERAEELGQELKAWQEKFFQKEQALSTLQLEHTSTQALVSELLPAKHLCQQLQAEQAAAEKRHREELEQSKQAAGGLRAELLRAQRELGELIPLRQKVAEQERTAQQLRAEKASYAEQLSMLKKAHGLLAEENRGLGERANLGRQFLEVELDQAREKYVQELAAVRADAETRLAEVQREAQSTARELEVMTAKYEGAKVKVLEERQRFQEERQKLTAQVEQLEVFQREQTKQVEELSKKLADSDQASKVQQQKLKAVQAQGGESQQEAQRLQAQLNELQAQLSQKEQAAEHYKLQMEKAKTHYDAKKQQNQELQEQLRSLEQLQKENKELRAEAERLGHELQQAGLKTKEAEQTCRHLTAQVRSLEAQVAHADQQLRDLGKFQVATDALKSREPQAKPQLDLSIDSLDLSCEEGTPLSITSKLPRTQPDGTSVPGEPASPISQRLPPKVESLESLYFTPIPARSQAPLESSLDSLGDVFLDSGRKTRSARRRTTQIINITMTKKLDVEEPDSANSSFYSTRSAPASQASLRATSSTQSLARLGSPDYGNSALLSLPGYRPTTRSSARRSQAGVSSGAPPGRNSFYMGTCQDEPEQLDDWNRIAELQQRNRVCPPHLKTCYPLESRPSLSLGTITDEEMKTGDPQETLRRASMQPIQIAEGTGITTRQQRKRVSLEPHQGPGTPESKKATSCFPRPMTPRDRHEGRKQSTTEAQKKAAPASTKQADRRQSMAFSILNTPKKLGNSLLRRGASKKALSKASPNTRSGTRRSPRIATTTASAATAAAIGATPRAKGKAKH.

The segment at 1–212 (MTLHATRGAA…SPMGDILQTP (212 aa)) is head (Globular). Ser162 is modified (phosphoserine). At Thr163 the chain carries Phosphothreonine. Phosphoserine occurs at positions 169 and 203. Residue Thr211 is modified to Phosphothreonine. Residues 213 to 1699 (QFQMRRLKKQ…ADQQLRDLGK (1487 aa)) are a coiled coil. Position 271 is a phosphoserine (Ser271). An N6-acetyllysine modification is found at Lys379. Residues Ser388 and Ser395 each carry the phosphoserine modification. Over residues 549–560 (LRHQVEQLSSSL) the composition is skewed to low complexity. Disordered regions lie at residues 549–593 (LRHQ…EERE) and 746–766 (LVEQHKRERKELEEERAGRKG). A compositionally biased stretch (basic and acidic residues) spans 561–581 (KQKEQQLKEVAEKQEATRQDH). The residue at position 820 (Ser820) is a Phosphoserine. N6-acetyllysine is present on Lys891. Basic and acidic residues-rich tracts occupy residues 926-950 (AGEQQETASRELVKEPARAGDRQPE) and 996-1013 (QEERGQQEREVARLTQER). Disordered regions lie at residues 926 to 958 (AGEQQETASRELVKEPARAGDRQPEWLEEQQGR) and 988 to 1013 (LMESQGQQQEERGQQEREVARLTQER). At Thr1047 the chain carries Phosphothreonine; by PLK1. Residues 1090-1102 (LKEQLAKKEKEHA) are compositionally biased toward basic and acidic residues. 2 disordered regions span residues 1090–1225 (LKEQ…RKNS) and 1275–1296 (ETASNSARAAERSSALREEVQS). 2 stretches are compositionally biased toward low complexity: residues 1103-1112 (SGSGAQSEAA) and 1133-1142 (EQQCQKQQEQ). Over residues 1145 to 1163 (SLERSLEAERASRAERDSA) the composition is skewed to basic and acidic residues. Ser1187 is subject to Phosphoserine. The span at 1198-1224 (KVQDHSKAEDEWKAQVARGRQEAERKN) shows a compositional bias: basic and acidic residues. The residue at position 1225 (Ser1225) is a Phosphoserine. Residues 1283–1296 (AAERSSALREEVQS) are compositionally biased toward basic and acidic residues. The residue at position 1511 (Lys1511) is an N6-acetyllysine. Ser1601 is modified (phosphoserine). A Glycyl lysine isopeptide (Lys-Gly) (interchain with G-Cter in SUMO2) cross-link involves residue Lys1699. The tract at residues 1699–1876 (KFQVATDALK…NSALLSLPGY (178 aa)) is membrane-binding domain 1. A tail (Globular) region spans residues 1700-2115 (FQVATDALKS…TPRAKGKAKH (416 aa)). Ser1721, Ser1724, and Ser1728 each carry phosphoserine. Residues 1734 to 1761 (PLSITSKLPRTQPDGTSVPGEPASPISQ) form a disordered region. Over residues 1735–1748 (LSITSKLPRTQPDG) the composition is skewed to polar residues. The short motif at 1742 to 1748 (PRTQPDG) is the Tankyrase-binding domain element. A phosphoserine mark is found at Ser1757 and Ser1760. Residue Lys1766 forms a Glycyl lysine isopeptide (Lys-Gly) (interchain with G-Cter in SUMO1); alternate linkage. A Glycyl lysine isopeptide (Lys-Gly) (interchain with G-Cter in SUMO2); alternate cross-link involves residue Lys1766. 2 positions are modified to phosphoserine; by PLK1: Ser1769 and Ser1772. Tyr1774 is modified (phosphotyrosine). Thr1776 carries the post-translational modification Phosphothreonine. Ser1788 carries the post-translational modification Phosphoserine. The tract at residues 1788-1810 (SSLDSLGDVFLDSGRKTRSARRR) is 4.1-binding domain. At Ser1789 the chain carries Phosphoserine; by PLK1. Phosphoserine is present on residues Ser1792 and Ser1800. Thr1804 carries the post-translational modification Phosphothreonine. A Glycyl lysine isopeptide (Lys-Gly) (interchain with G-Cter in SUMO2) cross-link involves residue Lys1822. Disordered stretches follow at residues 1826–1901 (EEPD…GRNS) and 1955–2115 (EMKT…KAKH). Phosphoserine is present on residues Ser1830 and Ser1833. The span at 1830–1857 (SANSSFYSTRSAPASQASLRATSSTQSL) shows a compositional bias: polar residues. The residue at position 1834 (Ser1834) is a Phosphoserine; by PLK1. A Phosphotyrosine modification is found at Tyr1836. The residue at position 1840 (Ser1840) is a Phosphoserine. The residue at position 1844 (Ser1844) is a Phosphoserine; alternate. Ser1844 is a glycosylation site (O-linked (GlcNAc) serine; alternate). Ser1862 and Ser1887 each carry phosphoserine. Positions 1879 to 1891 (TTRSSARRSQAGV) are enriched in polar residues. The tubulin-binding domain stretch occupies residues 1882 to 1985 (SSARRSQAGV…AEGTGITTRQ (104 aa)). Residues 1892–1926 (SSGAPPGRNSFYMGTCQDEPEQLDDWNRIAELQQR) form a GPSM2-binding domain region. Over residues 1955–1966 (EMKTGDPQETLR) the composition is skewed to basic and acidic residues. Ser1969 is subject to Phosphoserine. A membrane-binding domain 2 region spans residues 1981–2060 (ITTRQQRKRV…SILNTPKKLG (80 aa)). The short motif at 1984 to 1989 (RQQRKR) is the Nuclear localization signal element. Ser1991 carries the phosphoserine modification. At Thr2000 the chain carries Phosphothreonine. Ser2003 is subject to Phosphoserine. Thr2015 is modified (phosphothreonine; by CDK1). A compositionally biased stretch (basic and acidic residues) spans 2015–2032 (TPRDRHEGRKQSTTEAQK). Ser2047 is modified (phosphoserine). Residue Thr2055 is modified to Phosphothreonine; by CDK1. Phosphoserine occurs at positions 2062 and 2077. Ser2087 bears the Phosphoserine; by CDK1 mark. Over residues 2089-2108 (RIATTTASAATAAAIGATPR) the composition is skewed to low complexity. Thr2106 carries the phosphothreonine; by CDK1 modification.

As to quaternary structure, homodimer. Also forms multiarm oligomers by association of C-terminal tail domains, oligomers may further assemble to form a hexagonal nuclear lattice-like network. Associates with the dynein-dynactin complex; this association promotes the transport and accumulation of NUMA1 at the mitotic spindle poles that is inhibited by the BRISC complex in a PLK1-dependent manner. Part of a spindle orientation complex at least composed of GNAI1, GPSM2 and NUMA1. Interacts (via C-terminus) with microtubules (MTs); this interaction is direct and promotes both MT bundle formation and stability in a dynein-dynactin complex- and CDK1-independent manner. Interacts with EPB41 and EPB41L2; these interactions are negatively regulated by CDK1 during metaphase and are important for anaphase-specific localization of NUMA1 in symmetrically dividing cells. Interacts (via C-terminus) with GPSM2 (via TPR repeats); this interaction is direct, prevented by competitive binding of INSC, is inhibited in a PLK1-dependent manner, blocks the association of NUMA1 with MTs and inhibits NUMA1-induced MT bundle formation, prevents the association of NUMA1 with SPAG5, induces mitotic spindle pole localization of GPSM2, both metaphase cell cortex localization of NUMA1 and mitotic spindle organization. Does not interact with GPSM2 during anaphase. Interacts (via C-terminus) with the nuclear importin alpha/importin beta receptor; this interaction is inhibited by RanGTP. Interacts (via C-terminus) with KPNB1; this interaction is inhibited by RanGTP and the BRISC complex. Interacts with ABRAXAS2 and the BRISC complex; these interactions regulate mitotic spindle assembly. Interacts (via N-terminal end of the coiled-coil domain) with RAE1; this interaction promotes mitotic spindle formation. Interacts (via C-terminus) with SPAG5 (via C-terminus); this interaction promotes the recruitment of SPAG5 to the MTs at spindle poles in a dynein-dynactin-dependent manner and regulates mitotic spindle organization and proper chromosome alignment during mitosis. Interacts with TNKS; this interaction occurs at the onset of mitosis. Interacts with TNKS2. Interacts with tubulin. Interacts with KHDC3L (via C-terminus). In terms of processing, phosphorylation and dephosphorylation on Thr-2055 regulates the extent of cortical NUMA1 and the dynein-dynactin complex localization during mitotic metaphase and anaphase. In metaphase, phosphorylation on Thr-2055 occurs in a kinase CDK1-dependent manner; this phosphorylation maintains low levels of cortical dynein-dynactin complex at metaphase, and hence proper spindle positioning. In anaphase, dephosphorylated on Thr-2055 by phosphatase PPP2CA; this dephosphorylation stimulates its membrane association and with the dynein-dynactin complex its enrichment at the cell cortex, and hence robust spindle elongation. Probably also phosphorylated on Thr-2015 and Ser-2087 by CDK1; these phosphorylations may regulate its cell cortex recruitment during metaphase and anaphase. Phosphorylated on Thr-1047, Ser-1769, Ser-1772, Ser-1789 and Ser-1834 by PLK1; these phosphorylations induce cortical dynein-dynactin complex dissociation from the NUMA1-GPSM2 complex and negatively regulates cortical dynein-dynactin complex localization. Post-translationally, ADP-ribosylated by TNKS at the onset of mitosis; ADP-ribosylation is not required for its localization to spindle poles. O-glycosylated during cytokinesis at sites identical or close to phosphorylation sites, this interferes with the phosphorylation status. In terms of processing, ubiquitinated with 'Lys-63'-linked polyubiquitin chains. Deubiquitination by the BRISC complex is important for the incorporation of NUMA1 into mitotic spindle poles and normal spindle pole function, probably by modulating interactions between NUMA1, dynein-dynactin complex and importin-beta.

The protein resides in the nucleus. Its subcellular location is the nucleoplasm. It localises to the nucleus matrix. The protein localises to the chromosome. It is found in the cytoplasm. The protein resides in the cytoskeleton. Its subcellular location is the microtubule organizing center. It localises to the centrosome. The protein localises to the spindle pole. It is found in the cell cortex. The protein resides in the cell membrane. Its subcellular location is the lateral cell membrane. It localises to the cytosol. Functionally, microtubule (MT)-binding protein that plays a role in the formation and maintenance of the spindle poles and the alignement and the segregation of chromosomes during mitotic cell division. Functions to tether the minus ends of MTs at the spindle poles, which is critical for the establishment and maintenance of the spindle poles. Plays a role in the establishment of the mitotic spindle orientation during metaphase and elongation during anaphase in a dynein-dynactin-dependent manner. In metaphase, part of a ternary complex composed of GPSM2 and G(i) alpha proteins, that regulates the recruitment and anchorage of the dynein-dynactin complex in the mitotic cell cortex regions situated above the two spindle poles, and hence regulates the correct oritentation of the mitotic spindle. During anaphase, mediates the recruitment and accumulation of the dynein-dynactin complex at the cell membrane of the polar cortical region through direct association with phosphatidylinositol 4,5-bisphosphate (PI(4,5)P2), and hence participates in the regulation of the spindle elongation and chromosome segregation. Also binds to other polyanionic phosphoinositides, such as phosphatidylinositol 3-phosphate (PIP), lysophosphatidic acid (LPA) and phosphatidylinositol triphosphate (PIP3), in vitro. Also required for proper orientation of the mitotic spindle during asymmetric cell divisions. Plays a role in mitotic MT aster assembly. Involved in anastral spindle assembly. Positively regulates TNKS protein localization to spindle poles in mitosis. Highly abundant component of the nuclear matrix where it may serve a non-mitotic structural role, occupies the majority of the nuclear volume. Required for epidermal differentiation and hair follicle morphogenesis. This is Nuclear mitotic apparatus protein 1 from Homo sapiens (Human).